Reading from the N-terminus, the 1036-residue chain is Multidrug resistance protein MdtC (1036 aa).

Transmembrane regions (helical) follow at residues Val-12–Val-34, Arg-336–Leu-353, Leu-360–Phe-382, Val-431–Leu-450, Phe-463–Met-485, Trp-528–Ile-547, Leu-853–Ile-875, Leu-895–Val-917, Leu-949–Ser-971, and Ile-986–Phe-1008.

The protein belongs to the resistance-nodulation-cell division (RND) (TC 2.A.6) family. MdtC subfamily. As to quaternary structure, part of a tripartite efflux system composed of MdtA, MdtB and MdtC. MdtC forms a heteromultimer with MdtB.

Its subcellular location is the cell inner membrane. This is Multidrug resistance protein MdtC from Photorhabdus laumondii subsp. laumondii (strain DSM 15139 / CIP 105565 / TT01) (Photorhabdus luminescens subsp. laumondii).